We begin with the raw amino-acid sequence, 480 residues long: Proline--tRNA ligase (480 aa).

The protein belongs to the class-II aminoacyl-tRNA synthetase family. ProS type 3 subfamily. Homodimer.

The protein resides in the cytoplasm. The enzyme catalyses tRNA(Pro) + L-proline + ATP = L-prolyl-tRNA(Pro) + AMP + diphosphate. Functionally, catalyzes the attachment of proline to tRNA(Pro) in a two-step reaction: proline is first activated by ATP to form Pro-AMP and then transferred to the acceptor end of tRNA(Pro). This chain is Proline--tRNA ligase, found in Roseiflexus castenholzii (strain DSM 13941 / HLO8).